Here is a 366-residue protein sequence, read N- to C-terminus: Left-right determination factor 1 (366 aa).

A signal peptide spans 1–21 (MQPLWLCWALWVLPLASPGAA). Residues 22–76 (LTGEQLLGSLLRQLQLKEVPTLDRADMEELVIPTHVRAQYVALLQRSHGDRSRGK) constitute a propeptide, or 135. Asn158 carries an N-linked (GlcNAc...) asparagine glycan. 4 cysteine pairs are disulfide-bonded: Cys251/Cys264, Cys263/Cys316, Cys293/Cys351, and Cys297/Cys353.

It belongs to the TGF-beta family. In terms of processing, the processing of the protein may also occur at the second R-X-X-R site located at AA 132-135. Processing appears to be regulated in a cell-type specific manner.

It is found in the secreted. Required for left-right axis determination as a regulator of LEFTY2 and NODAL. The protein is Left-right determination factor 1 (LEFTY1) of Homo sapiens (Human).